The following is a 268-amino-acid chain: Putative hydro-lyase ACICU_01268 (268 aa).

This sequence belongs to the D-glutamate cyclase family.

This Acinetobacter baumannii (strain ACICU) protein is Putative hydro-lyase ACICU_01268.